The chain runs to 1279 residues: ATP-dependent helicase/nuclease subunit A (1279 aa).

The region spanning 4 to 499 (TKWTDEQRQA…VKLFKNFRSR (496 aa)) is the UvrD-like helicase ATP-binding domain. 25 to 32 (AGAGAGKT) contributes to the ATP binding site. The region spanning 526-853 (EEALKVGASY…RIMSIHKSKG (328 aa)) is the UvrD-like helicase C-terminal domain.

This sequence belongs to the helicase family. AddA subfamily. As to quaternary structure, heterodimer of AddA and AddB/RexB. Mg(2+) is required as a cofactor.

The catalysed reaction is Couples ATP hydrolysis with the unwinding of duplex DNA by translocating in the 3'-5' direction.. It catalyses the reaction ATP + H2O = ADP + phosphate + H(+). In terms of biological role, the heterodimer acts as both an ATP-dependent DNA helicase and an ATP-dependent, dual-direction single-stranded exonuclease. Recognizes the chi site generating a DNA molecule suitable for the initiation of homologous recombination. The AddA nuclease domain is required for chi fragment generation; this subunit has the helicase and 3' -&gt; 5' nuclease activities. This Clostridium botulinum (strain ATCC 19397 / Type A) protein is ATP-dependent helicase/nuclease subunit A.